Reading from the N-terminus, the 353-residue chain is Sulfate/thiosulfate import ATP-binding protein CysA (353 aa).

The ABC transporter domain maps to 3-237 (IQVKNIEKHF…PATPFVFDFL (235 aa)). An ATP-binding site is contributed by 35–42 (GPSGCGKT).

The protein belongs to the ABC transporter superfamily. Sulfate/tungstate importer (TC 3.A.1.6) family. The complex is composed of two ATP-binding proteins (CysA), two transmembrane proteins (CysT and CysW) and a solute-binding protein (CysP).

The protein resides in the cell inner membrane. It carries out the reaction sulfate(out) + ATP + H2O = sulfate(in) + ADP + phosphate + H(+). The enzyme catalyses thiosulfate(out) + ATP + H2O = thiosulfate(in) + ADP + phosphate + H(+). Its function is as follows. Part of the ABC transporter complex CysAWTP involved in sulfate/thiosulfate import. Responsible for energy coupling to the transport system. This is Sulfate/thiosulfate import ATP-binding protein CysA from Acinetobacter baylyi (strain ATCC 33305 / BD413 / ADP1).